A 119-amino-acid polypeptide reads, in one-letter code: MISKPDKNKTRQKRHTRVRGKISGTADCPRLNVFRSNKNIYAQLIDDVAGVTLASASTLDKEVKVEGTKVEQAQQVGALVAQRAVKAGHKVVVFDRGGYLYHGRIAALATAARENGLEF.

Residues 1–20 (MISKPDKNKTRQKRHTRVRG) are disordered. Residues 10–20 (TRQKRHTRVRG) are compositionally biased toward basic residues.

It belongs to the universal ribosomal protein uL18 family. Part of the 50S ribosomal subunit; part of the 5S rRNA/L5/L18/L25 subcomplex. Contacts the 5S and 23S rRNAs.

Its function is as follows. This is one of the proteins that bind and probably mediate the attachment of the 5S RNA into the large ribosomal subunit, where it forms part of the central protuberance. The polypeptide is Large ribosomal subunit protein uL18 (Latilactobacillus sakei subsp. sakei (strain 23K) (Lactobacillus sakei subsp. sakei)).